The sequence spans 102 residues: UPF0235 protein msl4154 (102 aa).

This sequence belongs to the UPF0235 family.

This Mesorhizobium japonicum (strain LMG 29417 / CECT 9101 / MAFF 303099) (Mesorhizobium loti (strain MAFF 303099)) protein is UPF0235 protein msl4154.